Reading from the N-terminus, the 353-residue chain is Cyclic GMP-AMP synthase-like receptor (353 aa).

ATP-binding positions include S60 and 72–74; that span reads EYD. The Mg(2+) site is built by E72, D74, and D183. D183 provides a ligand contact to GTP. K245 is an ATP binding site. Mn(2+) contacts are provided by L269 and E270.

This sequence belongs to the mab-21 family. Requires Mg(2+) as cofactor. Mn(2+) serves as cofactor.

It catalyses the reaction GTP + ATP = 2',3'-cGAMP + 2 diphosphate. It carries out the reaction GTP + ATP = pppGp(2'-5')A + diphosphate. The enzyme catalyses pppGp(2'-5')A = 2',3'-cGAMP + diphosphate. In terms of biological role, nucleotidyltransferase that catalyzes the formation of cyclic GMP-AMP (2',3'-cGAMP) from ATP and GTP and plays a key role in innate immunity. Acts as a key sensor of double-stranded RNA (dsRNA), the presence of dsRNA in the cytoplasm being a danger signal that triggers the immune responses. Directly binds dsRNA, activating the nucleotidyltransferase activity, leading to synthesis of 2',3'-cGAMP, a second messenger that binds to and activates Sting, thereby triggering the immune response via activation of the NF-kappa-B transcription factor. This chain is Cyclic GMP-AMP synthase-like receptor, found in Nicrophorus vespilloides (Boreal carrion beetle).